The chain runs to 110 residues: Protein ripply3 (110 aa).

Positions 18–21 (WRPW) match the WRPW motif motif. The tract at residues 50–85 (HPVRLFLPRSRMQEYLSRLGSSVLASFPVQATLHFY) is ripply homology domain. Over residues 87 to 99 (DEDSSSEEEEDEE) the composition is skewed to acidic residues. Residues 87-110 (DEDSSSEEEEDEEHANTRCRLWRP) are disordered.

This sequence belongs to the ripply family.

It localises to the nucleus. Functionally, probable transcriptional regulator involved in developmental processes. This Danio rerio (Zebrafish) protein is Protein ripply3 (ripply3).